The sequence spans 449 residues: MFS-type transporter hasB (449 aa).

12 helical membrane-spanning segments follow: residues 44–64 (VAGS…CGIF), 80–100 (ALAW…PAVG), 112–132 (LPPF…CTKY), 135–155 (VMLA…LPAM), 168–188 (LAVG…PCML), 195–215 (VGFA…LFIA), 255–275 (LPWG…FAPL), 296–316 (AIAN…SDII), 322–342 (MCIV…PLEF), 346–366 (LAGI…FVSL), 387–407 (GGFC…EGAI), and 415–435 (FTGL…CTGT).

It belongs to the major facilitator superfamily. Monocarboxylate porter (TC 2.A.1.13) family.

The protein localises to the membrane. Functionally, MFS-type transporter; part of the gene cluster that mediates the biosynthesis of hexadehydro-astechrome (HAS), a tryptophan-derived iron(III)-complex that acts as a virulence factor in infected mice. Required for the production of HAS. In Aspergillus fumigatus (strain CBS 144.89 / FGSC A1163 / CEA10) (Neosartorya fumigata), this protein is MFS-type transporter hasB.